Here is a 253-residue protein sequence, read N- to C-terminus: Ribosome-inactivating protein saporin-9 (253 aa).

The active site involves Glu-176.

The catalysed reaction is Endohydrolysis of the N-glycosidic bond at one specific adenosine on the 28S rRNA.. In terms of biological role, ribosome-inactivating protein of type 1, inhibits protein synthesis in animal cells. The sequence is that of Ribosome-inactivating protein saporin-9 (SAP9) from Saponaria officinalis (Common soapwort).